A 244-amino-acid chain; its full sequence is UDP-2,3-diacylglucosamine hydrolase (244 aa).

Aspartate 8, histidine 10, aspartate 41, asparagine 79, and histidine 114 together coordinate Mn(2+). Position 79-80 (asparagine 79–arginine 80) interacts with substrate. Aspartate 122, lysine 164, lysine 167, and histidine 195 together coordinate substrate. 2 residues coordinate Mn(2+): histidine 195 and histidine 197.

It belongs to the LpxH family. Mn(2+) is required as a cofactor.

Its subcellular location is the cell inner membrane. The enzyme catalyses UDP-2-N,3-O-bis[(3R)-3-hydroxytetradecanoyl]-alpha-D-glucosamine + H2O = 2-N,3-O-bis[(3R)-3-hydroxytetradecanoyl]-alpha-D-glucosaminyl 1-phosphate + UMP + 2 H(+). It functions in the pathway glycolipid biosynthesis; lipid IV(A) biosynthesis; lipid IV(A) from (3R)-3-hydroxytetradecanoyl-[acyl-carrier-protein] and UDP-N-acetyl-alpha-D-glucosamine: step 4/6. Its function is as follows. Hydrolyzes the pyrophosphate bond of UDP-2,3-diacylglucosamine to yield 2,3-diacylglucosamine 1-phosphate (lipid X) and UMP by catalyzing the attack of water at the alpha-P atom. Involved in the biosynthesis of lipid A, a phosphorylated glycolipid that anchors the lipopolysaccharide to the outer membrane of the cell. The polypeptide is UDP-2,3-diacylglucosamine hydrolase (Vibrio atlanticus (strain LGP32) (Vibrio splendidus (strain Mel32))).